The sequence spans 549 residues: Glucose-6-phosphate isomerase (549 aa).

Residues lysine 80, lysine 228, and lysine 234 each carry the N6-acetyllysine modification. Glutamate 355 (proton donor) is an active-site residue. Catalysis depends on residues histidine 386 and lysine 514.

Belongs to the GPI family.

The protein resides in the cytoplasm. It carries out the reaction alpha-D-glucose 6-phosphate = beta-D-fructose 6-phosphate. It functions in the pathway carbohydrate biosynthesis; gluconeogenesis. The protein operates within carbohydrate degradation; glycolysis; D-glyceraldehyde 3-phosphate and glycerone phosphate from D-glucose: step 2/4. In terms of biological role, catalyzes the reversible isomerization of glucose-6-phosphate to fructose-6-phosphate. In Escherichia coli O139:H28 (strain E24377A / ETEC), this protein is Glucose-6-phosphate isomerase.